Reading from the N-terminus, the 339-residue chain is Serpentine receptor class alpha-24 (339 aa).

7 consecutive transmembrane segments (helical) span residues 26–46 (ITVKMSSVLVVTVILLSYYFA), 65–82 (LILLVCLLNSIIHQTTML), 112–132 (ELFVYYLTTYFSTYSVFSLAF), 151–171 (VSIFLLFIQLIFTLGTYYVGL), 199–219 (FRTLIMGICIIVTVFVYYLSV), 248–268 (VCILIVLQFACILISSLGVNY), and 284–304 (LAPFFVGVTYANLCLPLVIHC).

It belongs to the nematode receptor-like protein sra family.

The protein resides in the membrane. The sequence is that of Serpentine receptor class alpha-24 (sra-24) from Caenorhabditis elegans.